The chain runs to 534 residues: Peptide chain release factor 3 (534 aa).

In terms of domain architecture, tr-type G spans 9 to 278 (ARRRTFAIIS…FFVEHAPPPQ (270 aa)). GTP is bound by residues 18 to 25 (SHPDAGKT), 86 to 90 (DTPGH), and 140 to 143 (NKLD).

This sequence belongs to the TRAFAC class translation factor GTPase superfamily. Classic translation factor GTPase family. PrfC subfamily.

The protein localises to the cytoplasm. In terms of biological role, increases the formation of ribosomal termination complexes and stimulates activities of RF-1 and RF-2. It binds guanine nucleotides and has strong preference for UGA stop codons. It may interact directly with the ribosome. The stimulation of RF-1 and RF-2 is significantly reduced by GTP and GDP, but not by GMP. This chain is Peptide chain release factor 3, found in Xanthomonas axonopodis pv. citri (strain 306).